We begin with the raw amino-acid sequence, 579 residues long: Isocitrate dehydrogenase kinase/phosphatase (579 aa).

Residues 324–330 (ADGTPGM) and K345 contribute to the ATP site. The active site involves D380.

The protein belongs to the AceK family.

It is found in the cytoplasm. The catalysed reaction is L-seryl-[isocitrate dehydrogenase] + ATP = O-phospho-L-seryl-[isocitrate dehydrogenase] + ADP + H(+). Bifunctional enzyme which can phosphorylate or dephosphorylate isocitrate dehydrogenase (IDH) on a specific serine residue. This is a regulatory mechanism which enables bacteria to bypass the Krebs cycle via the glyoxylate shunt in response to the source of carbon. When bacteria are grown on glucose, IDH is fully active and unphosphorylated, but when grown on acetate or ethanol, the activity of IDH declines drastically concomitant with its phosphorylation. The polypeptide is Isocitrate dehydrogenase kinase/phosphatase (Xanthomonas axonopodis pv. citri (strain 306)).